The chain runs to 263 residues: Tryptophan 2,3-dioxygenase (263 aa).

Substrate contacts are provided by residues Phe32–His36, Tyr94, and Arg98. His221 provides a ligand contact to heme. Substrate is bound at residue Thr235.

The protein belongs to the tryptophan 2,3-dioxygenase family. In terms of assembly, homotetramer. It depends on heme as a cofactor.

It carries out the reaction L-tryptophan + O2 = N-formyl-L-kynurenine. Its pathway is amino-acid degradation; L-tryptophan degradation via kynurenine pathway; L-kynurenine from L-tryptophan: step 1/2. Its function is as follows. Heme-dependent dioxygenase that catalyzes the oxidative cleavage of the L-tryptophan (L-Trp) pyrrole ring and converts L-tryptophan to N-formyl-L-kynurenine. Catalyzes the oxidative cleavage of the indole moiety. This Caulobacter vibrioides (strain ATCC 19089 / CIP 103742 / CB 15) (Caulobacter crescentus) protein is Tryptophan 2,3-dioxygenase.